Reading from the N-terminus, the 313-residue chain is MPTPKAFALLGPTAGGKTALALKIAETLPVEIISLDSALVYRDMDIGTAKPSASERAFVPHHLIDIIPPTESYSAARFVEDCTRLVGEISSRGRFALIVGGTMMYFRALTQGLNDLPEADACLRADLDEQKQMYGLDFLYRTLQKVDPETACRLKPNDSQRIGRALEVYYLTGKPMSTHLGSLTSHTLPFDLHTAALIPENRARLHENIALRFHLMLEQGFIGEVENLRRRYPGLTAYSPAIRCVGYRQAWKYLDGKTDFPAFVEKGIAATRQLAKRQLTWLRKTPLDCVADPFSDCTSCTRLIEAAKRFFGA.

11–18 (GPTAGGKT) is a binding site for ATP. 13-18 (TAGGKT) contacts substrate. Interaction with substrate tRNA stretches follow at residues 36 to 39 (DSAL), 160 to 164 (QRIGR), and 243 to 248 (RCVGYR).

The protein belongs to the IPP transferase family. Monomer. The cofactor is Mg(2+).

It catalyses the reaction adenosine(37) in tRNA + dimethylallyl diphosphate = N(6)-dimethylallyladenosine(37) in tRNA + diphosphate. Catalyzes the transfer of a dimethylallyl group onto the adenine at position 37 in tRNAs that read codons beginning with uridine, leading to the formation of N6-(dimethylallyl)adenosine (i(6)A). The chain is tRNA dimethylallyltransferase from Neisseria meningitidis serogroup B (strain ATCC BAA-335 / MC58).